A 999-amino-acid polypeptide reads, in one-letter code: P3N-PIPO polyprotein (999 aa).

A Peptidase S30 domain is found at 176-317; sequence LKKAVGSGKV…LDNVYTIEHY (142 aa). Residues histidine 230, glutamate 239, and serine 271 each act as for P1 proteinase activity in the active site. The short motif at 370–373 is the Involved in interaction with stylet and aphid transmission element; sequence KLSC. Residues 626-628 carry the Involved in virions binding and aphid transmission motif; sequence PTK. Residues 652 to 774 form the Peptidase C6 domain; the sequence is MYIAKEGYCY…EGEMKHYRVG (123 aa). Residues cysteine 660 and histidine 733 each act as for helper component proteinase activity in the active site.

This sequence belongs to the potyviridae P3N-PIPO polyprotein family. In terms of assembly, interacts (via PIPO domain) with host PCaP1 protein; this interaction may help to anchor the movement complex to the plasma membrane from which the complex could move to the plasmodesmata. Post-translationally, potyviral RNA is expressed as two polyproteins which undergo post-translational proteolytic processing. Genome polyprotein is processed by NIa-pro, P1 and HC-pro proteinases resulting in the production of at least ten individual proteins. P3N-PIPO is cleaved by P1 and HC-pro proteinases resulting in the production of three individual proteins. The P1 proteinase and the HC-pro cleave only their respective C-termini autocatalytically.

It is found in the host cell junction. The protein localises to the host plasmodesma. It carries out the reaction Hydrolyzes a Gly-|-Gly bond at its own C-terminus, commonly in the sequence -Tyr-Xaa-Val-Gly-|-Gly, in the processing of the potyviral polyprotein.. Its function is as follows. Required for aphid transmission and also has proteolytic activity. Only cleaves a Gly-Gly dipeptide at its own C-terminus. Interacts with virions and aphid stylets. Acts as a suppressor of RNA-mediated gene silencing, also known as post-transcriptional gene silencing (PTGS), a mechanism of plant viral defense that limits the accumulation of viral RNAs. May have RNA-binding activity. Functionally, allows efficient cell to cell propagation, by bypassing the host cell wall barrier. Transports viral genome to neighboring plant cells directly through plasmosdesmata, without any budding. The sequence is that of P3N-PIPO polyprotein from Phaseolus vulgaris (Kidney bean).